Reading from the N-terminus, the 960-residue chain is FYVE, RhoGEF and PH domain-containing protein 1 (960 aa).

Disordered regions lie at residues 1-210 and 226-355; these read MHGH…SSAA and ASDR…REIP. S48 carries the post-translational modification Phosphoserine. The span at 125 to 135 shows a compositional bias: basic and acidic residues; that stretch reads PHPEGPQRLRS. 3 stretches are compositionally biased toward pro residues: residues 137–149, 156–165, and 173–190; these read PGPP…PRPS, GPKPQVPPKP, and VLPP…PLPA. The SH3-binding motif lies at 171 to 187; it reads PRVLPPPEPIPPPPSRP. Residue S205 is modified to Phosphoserine. The span at 231 to 251 shows a compositional bias: pro residues; that stretch reads APGPCPVPPEPAMLPQPPPQP. Basic and acidic residues predominate over residues 273–284; it reads RDGEKVPNRDSG. The span at 285-294 shows a compositional bias: low complexity; that stretch reads IDSISSPSNS. Positions 335-350 are enriched in acidic residues; it reads VDSDLEEEEEEEEEEK. Residues 372–560 enclose the DH domain; it reads KVFHIANELL…ATAAEHSNAA (189 aa). The 100-residue stretch at 589-688 folds into the PH 1 domain; that stretch reads ELIKEGHILK…WVQAINSTLL (100 aa). The segment at 701–725 is disordered; the sequence is NSTNRDDEDTPPNSPNVDLGKRAPT. Position 710 is a phosphothreonine (T710). Position 714 is a phosphoserine (S714). The FYVE-type zinc finger occupies 729-789; that stretch reads EKEVTMCMRC…VCTDCYVALH (61 aa). The Zn(2+) site is built by C735, C738, C752, C755, C760, C763, C781, and C784. The 101-residue stretch at 820–920 folds into the PH 2 domain; that stretch reads NSVICSFLHY…WMAVLGRAGR (101 aa). The tract at residues 922-960 is disordered; that stretch reads DTFCPGPTLSEDKEMEETPVAASGATAEPPEASQTRDKT.

As to quaternary structure, interacts with DBNL/ABP1 and CTTN. Binds CDC42. May interact with CCPG1.

Its subcellular location is the cytoplasm. It is found in the cell projection. The protein localises to the lamellipodium. The protein resides in the ruffle. It localises to the cytoskeleton. In terms of biological role, activates CDC42, a member of the Ras-like family of Rho- and Rac proteins, by exchanging bound GDP for free GTP. Plays a role in regulating the actin cytoskeleton and cell shape. This Mus musculus (Mouse) protein is FYVE, RhoGEF and PH domain-containing protein 1 (Fgd1).